An 828-amino-acid polypeptide reads, in one-letter code: Protein SEY1 homolog (828 aa).

The Cytoplasmic portion of the chain corresponds to 1–718 (MTEDVMNDDF…SSKNGISWKN (718 aa)). The 241-residue stretch at 44 to 284 (GFNYNVLSIL…VPSDGFFYYA (241 aa)) folds into the GB1/RHD3-type G domain. Position 54 to 61 (54 to 61 (GCQSSGKS)) interacts with GTP. The helical transmembrane segment at 719 to 739 (IPPPFWILLLLCSWNELCSVL) threads the bilayer. Residues 740-742 (RIV) are Lumenal-facing. A helical membrane pass occupies residues 743–763 (FKVQVLIPLIILGFIVVQYFS). Residues 764–828 (HLVFGTSADA…NDSGKKAEEN (65 aa)) lie on the Cytoplasmic side of the membrane.

It belongs to the TRAFAC class dynamin-like GTPase superfamily. GB1/RHD3 GTPase family. RHD3 subfamily.

The protein resides in the endoplasmic reticulum membrane. Probable GTP-binding protein that may be involved in cell development. The protein is Protein SEY1 homolog of Babesia bovis.